The sequence spans 223 residues: Virulence transcriptional regulatory protein PhoP (223 aa).

The Response regulatory domain maps to 2–116 (RVLVVEDNAL…EVMARMQALM (115 aa)). The residue at position 51 (aspartate 51) is a 4-aspartylphosphate. A DNA-binding region (ompR/PhoB-type) is located at residues 124-222 (SQVISLPPFQ…VRGQGYLFEL (99 aa)).

In terms of processing, phosphorylated by PhoQ.

The protein localises to the cytoplasm. Its function is as follows. Member of the two-component regulatory system PhoQ/PhoP involved in virulence and adaptation to low Mg(2+) environments. Necessary for resistance to killing by polymorphonuclear leukocytes (PMNs) and cationic antimicrobial peptides (CAMP) they produce. In Shigella flexneri, this protein is Virulence transcriptional regulatory protein PhoP (phoP).